Reading from the N-terminus, the 81-residue chain is MSHTVKIYDTCIGCTQCVRACPTDVLEMVPWDGCKAGQIASSPRTEDCVGCKRCETACPTDFLSIRVYLGAETTRSMGLAY.

2 4Fe-4S ferredoxin-type domains span residues 1–31 (MSHT…MVPW) and 37–68 (GQIA…IRVY). Residues Cys11, Cys14, Cys17, Cys21, Cys48, Cys51, Cys54, and Cys58 each contribute to the [4Fe-4S] cluster site.

In terms of assembly, the cyanobacterial PSI reaction center is composed of one copy each of PsaA,B,C,D,E,F,I,J,K,L,M and X, and forms trimeric complexes. Requires [4Fe-4S] cluster as cofactor.

It localises to the cellular thylakoid membrane. The enzyme catalyses reduced [plastocyanin] + hnu + oxidized [2Fe-2S]-[ferredoxin] = oxidized [plastocyanin] + reduced [2Fe-2S]-[ferredoxin]. Functionally, apoprotein for the two 4Fe-4S centers FA and FB of photosystem I (PSI); essential for photochemical activity. FB is the terminal electron acceptor of PSI, donating electrons to ferredoxin. The C-terminus interacts with PsaA/B/D and helps assemble the protein into the PSI complex. Required for binding of PsaD and PsaE to PSI. PSI is a plastocyanin/cytochrome c6-ferredoxin oxidoreductase, converting photonic excitation into a charge separation, which transfers an electron from the donor P700 chlorophyll pair to the spectroscopically characterized acceptors A0, A1, FX, FA and FB in turn. This chain is Photosystem I iron-sulfur center, found in Acaryochloris marina (strain MBIC 11017).